The following is a 1082-amino-acid chain: Sodium/potassium exporting P-type ATPase 2 (1082 aa).

The Cytoplasmic portion of the chain corresponds to 1-75 (MSSINTNVAE…GANTLGDGDK (75 aa)). The chain crosses the membrane as a helical span at residues 76–96 (ISLTKIIAHQVCNAMILVLII). The Extracellular portion of the chain corresponds to 97–98 (SM). The chain crosses the membrane as a helical span at residues 99–119 (VIALAIKDWISGGVIGFVVLI). Topologically, residues 120–308 (NISVGFVQEY…VGTPLQRKLS (189 aa)) are cytoplasmic. The chain crosses the membrane as a helical span at residues 309-329 (WLAIFLFWGCRYFCNYCNGIP). Topologically, residues 330-336 (KNRVNKE) are extracellular. The chain crosses the membrane as a helical span at residues 337-357 (VAIYAICVALSMIPSALIVVL). Topologically, residues 358–807 (TITMAVGAQV…RMSSNIQKFV (450 aa)) are cytoplasmic. The 4-aspartylphosphate intermediate role is filled by D393. D393 and T395 together coordinate Mg(2+). Positions 395, 499, 552, 604, 664, 665, 666, 723, and 729 each coordinate ATP. D748 provides a ligand contact to Mg(2+). Position 751 (N751) interacts with ATP. A helical membrane pass occupies residues 808 to 828 (LQLLAENVAQALYLMVGLAFI). Residues 829 to 832 (DDSG) lie on the Extracellular side of the membrane. Residues 833 to 853 (LSVFPLSPVEVLWILVVTSCF) form a helical membrane-spanning segment. The Cytoplasmic portion of the chain corresponds to 854 to 884 (PAMDLGQERASDDILEESPNSTIFTWEVIID). Residues 885 to 905 (MIVYGFWMAVCCLVCFVIIVY) form a helical membrane-spanning segment. Topologically, residues 906 to 935 (GEGDPYLGVNCNKSSSSNSDVCELVFRGRS) are extracellular. Residues 936–956 (ASFATMTWCALILAWECIHPY) traverse the membrane as a helical segment. The Cytoplasmic segment spans residues 957–983 (NSLFYMRQDTDHPWWKQTVIDLWDNQF). Residues 984-1004 (LFWSVAIGFISVFPVVYIPVI) traverse the membrane as a helical segment. Residues 1005–1007 (NTK) lie on the Extracellular side of the membrane. Residues 1008–1028 (VFLHGPIGYEWGLAVGFSILF) traverse the membrane as a helical segment. Residues 1029–1082 (LAGSELWKWIKRIHKRKANKKAKNPEYELERSDPFKKYASFSRSNTMDRPELMV) are Cytoplasmic-facing.

This sequence belongs to the cation transport ATPase (P-type) (TC 3.A.3) family. Type IID subfamily. The cofactor is Mg(2+). In terms of processing, the active site is phosphorylated in presence of sodium or potassium and in conditions of higher pH. Not phosphorylated in presence of calcium ions.

Its subcellular location is the cell membrane. The enzyme catalyses Na(+)(in) + ATP + H2O = Na(+)(out) + ADP + phosphate + H(+). It catalyses the reaction K(+)(in) + ATP + H2O = K(+)(out) + ADP + phosphate + H(+). In terms of biological role, catalyzes the hydrolysis of ATP coupled with the export of sodium and potassium from the cell. May be an inefficient sodium exporter. May transport other cations such as lithium. Sodium/potassium efflux ATPases are involved in salt tolerance and maintaining the membrane potential across the plasma membrane in high salinity (Na+) or alkaline (K+) environments. This chain is Sodium/potassium exporting P-type ATPase 2, found in Schwanniomyces occidentalis (Yeast).